The following is a 107-amino-acid chain: Small ribosomal subunit protein bS18c (107 aa).

Residues 85 to 95 (KKAQRFKRRQS) show a composition bias toward basic residues. The disordered stretch occupies residues 85 to 107 (KKAQRFKRRQSTARTVGLRTRNK).

Belongs to the bacterial ribosomal protein bS18 family. As to quaternary structure, part of the 30S ribosomal subunit.

It is found in the plastid. Its subcellular location is the chloroplast. This is Small ribosomal subunit protein bS18c from Oenothera argillicola (Appalachian evening primrose).